Consider the following 428-residue polypeptide: Gamma-glutamyl phosphate reductase (428 aa).

Belongs to the gamma-glutamyl phosphate reductase family.

The protein localises to the cytoplasm. The enzyme catalyses L-glutamate 5-semialdehyde + phosphate + NADP(+) = L-glutamyl 5-phosphate + NADPH + H(+). The protein operates within amino-acid biosynthesis; L-proline biosynthesis; L-glutamate 5-semialdehyde from L-glutamate: step 2/2. In terms of biological role, catalyzes the NADPH-dependent reduction of L-glutamate 5-phosphate into L-glutamate 5-semialdehyde and phosphate. The product spontaneously undergoes cyclization to form 1-pyrroline-5-carboxylate. This chain is Gamma-glutamyl phosphate reductase, found in Agrobacterium fabrum (strain C58 / ATCC 33970) (Agrobacterium tumefaciens (strain C58)).